The sequence spans 503 residues: GMP synthase [glutamine-hydrolyzing] (503 aa).

Residues 3 to 189 (PVLVVDFGSQ…AFLSSFAAPN (187 aa)) form the Glutamine amidotransferase type-1 domain. Residue Cys-80 is the Nucleophile of the active site. Residues His-165 and Glu-167 contribute to the active site. The region spanning 190 to 380 (WDPEQTICGT…LGIPKHIVHR (191 aa)) is the GMPS ATP-PPase domain. 217 to 223 (SGGVDSV) contacts ATP.

As to quaternary structure, homodimer.

The catalysed reaction is XMP + L-glutamine + ATP + H2O = GMP + L-glutamate + AMP + diphosphate + 2 H(+). It functions in the pathway purine metabolism; GMP biosynthesis; GMP from XMP (L-Gln route): step 1/1. Its function is as follows. Catalyzes the synthesis of GMP from XMP. The protein is GMP synthase [glutamine-hydrolyzing] of Tropheryma whipplei (strain Twist) (Whipple's bacillus).